Here is a 296-residue protein sequence, read N- to C-terminus: 33 kDa chaperonin (296 aa).

2 cysteine pairs are disulfide-bonded: cysteine 238-cysteine 240 and cysteine 271-cysteine 274.

The protein belongs to the HSP33 family. In terms of processing, under oxidizing conditions two disulfide bonds are formed involving the reactive cysteines. Under reducing conditions zinc is bound to the reactive cysteines and the protein is inactive.

It is found in the cytoplasm. Redox regulated molecular chaperone. Protects both thermally unfolding and oxidatively damaged proteins from irreversible aggregation. Plays an important role in the bacterial defense system toward oxidative stress. This is 33 kDa chaperonin from Clostridium botulinum (strain Okra / Type B1).